The following is a 155-amino-acid chain: Small ribosomal subunit protein uS7 (155 aa).

It belongs to the universal ribosomal protein uS7 family. As to quaternary structure, part of the 30S ribosomal subunit. Contacts proteins S9 and S11.

In terms of biological role, one of the primary rRNA binding proteins, it binds directly to 16S rRNA where it nucleates assembly of the head domain of the 30S subunit. Is located at the subunit interface close to the decoding center, probably blocks exit of the E-site tRNA. The polypeptide is Small ribosomal subunit protein uS7 (Sulfurimonas denitrificans (strain ATCC 33889 / DSM 1251) (Thiomicrospira denitrificans (strain ATCC 33889 / DSM 1251))).